A 167-amino-acid polypeptide reads, in one-letter code: Large ribosomal subunit protein uL10 (167 aa).

Belongs to the universal ribosomal protein uL10 family. As to quaternary structure, part of the ribosomal stalk of the 50S ribosomal subunit. The N-terminus interacts with L11 and the large rRNA to form the base of the stalk. The C-terminus forms an elongated spine to which L12 dimers bind in a sequential fashion forming a multimeric L10(L12)X complex.

In terms of biological role, forms part of the ribosomal stalk, playing a central role in the interaction of the ribosome with GTP-bound translation factors. The sequence is that of Large ribosomal subunit protein uL10 from Mycoplasma mobile (strain ATCC 43663 / 163K / NCTC 11711) (Mesomycoplasma mobile).